Reading from the N-terminus, the 122-residue chain is Large ribosomal subunit protein uL14 (122 aa).

This sequence belongs to the universal ribosomal protein uL14 family. As to quaternary structure, part of the 50S ribosomal subunit. Forms a cluster with proteins L3 and L19. In the 70S ribosome, L14 and L19 interact and together make contacts with the 16S rRNA in bridges B5 and B8.

Functionally, binds to 23S rRNA. Forms part of two intersubunit bridges in the 70S ribosome. In Shewanella halifaxensis (strain HAW-EB4), this protein is Large ribosomal subunit protein uL14.